The sequence spans 141 residues: Acetyltransferase YpeA (141 aa).

Residues 1–141 (MEIRVFRQED…GKRLIEDEEY (141 aa)) enclose the N-acetyltransferase domain.

It belongs to the acetyltransferase family. YpeA subfamily.

The sequence is that of Acetyltransferase YpeA from Salmonella choleraesuis (strain SC-B67).